Here is a 78-residue protein sequence, read N- to C-terminus: Large ribosomal subunit protein bL28 (78 aa).

The interval 1-20 (MSRVCQVTGKRPVTGNNRSH) is disordered.

It belongs to the bacterial ribosomal protein bL28 family.

The protein is Large ribosomal subunit protein bL28 of Vibrio atlanticus (strain LGP32) (Vibrio splendidus (strain Mel32)).